The primary structure comprises 519 residues: Chaperone SurA (519 aa).

Positions 1–31 are cleaved as a signal peptide; that stretch reads MMRSLHSLRRMSGTVLALMLAAGLPLSAAQA. Low complexity-rich tracts occupy residues 31-45 and 197-207; these read AQPAKPAPKGDQKPA and PAAAQATRAPA. 2 disordered regions span residues 31-50 and 196-221; these read AQPAKPAPKGDQKPATPAPS and NPAAAQATRAPAPQQPQPQPRQPAQS. The PpiC 1 domain occupies 223-324; that stretch reads PAMLVLAQIL…NGFHILKVVD (102 aa). Residues 328–361 form a disordered region; it reads GGQPAQAARPAPAPAPQQPSSFQEGPSVAAPQGP. In terms of domain architecture, PpiC 2 spans 364-463; the sequence is VTQTHARHIL…FGWHLIQVLE (100 aa).

The protein localises to the periplasm. The catalysed reaction is [protein]-peptidylproline (omega=180) = [protein]-peptidylproline (omega=0). Chaperone involved in the correct folding and assembly of outer membrane proteins. Recognizes specific patterns of aromatic residues and the orientation of their side chains, which are found more frequently in integral outer membrane proteins. May act in both early periplasmic and late outer membrane-associated steps of protein maturation. This is Chaperone SurA from Bordetella bronchiseptica (strain ATCC BAA-588 / NCTC 13252 / RB50) (Alcaligenes bronchisepticus).